A 1338-amino-acid chain; its full sequence is Nonribosomal peptide synthetase astA (1338 aa).

The disordered stretch occupies residues 22–52 (IAVVSGDIPSPHPKNEPSQTSTLHIPRDSDL). Residues 271–681 (FQARCRQNPS…GRKGAEVKLR (411 aa)) are adenylation. In terms of domain architecture, Carrier spans 820–893 (TPVEIIIHDA…SLAEKCSAGG (74 aa)). The residue at position 854 (serine 854) is an O-(pantetheine 4'-phosphoryl)serine. Residues 949–1336 (TFIFRLSGPV…IIRFLDSPDS (388 aa)) are condensation.

It belongs to the NRP synthetase family.

It catalyses the reaction 7beta,14,16-trihydroxyconfertifolin + benzoate + H(+) = dideacetyl astellolide A + H2O. The catalysed reaction is 7beta,14,16-trihydroxyconfertifolin + 4-hydroxybenzoate + H(+) = dideacetyl astellolide B + H2O. It participates in secondary metabolite biosynthesis; terpenoid biosynthesis. In terms of biological role, nonribosomal peptide synthetase; part of the gene cluster that mediates the biosynthesis of astellolides, drimane-type sesquiterpene esters that show antimicrobial, anti-inflammatory, and anti-tumor activities. The first step in astellolide biosynthesis is performed by the sesquiterpene cyclase astC that catalyzes the formation of drimanyl pyrophosphate from farnesyl pyrophosphate. Drimanyl pyrophosphate is then dephosphorylated by the sesquiterpene phosphatase astI to produce drimanyl monophosphate which is further dephosphorylated to drim-8-ene-11-ol by atsK. Drim-8-ene-11-ol is converted to confertifolin, probably by the cytochrome P450 monooxygenase astD and/or the dehydrogenase astE. The cytochrome P450 monooxygenases astB, astF and astJ then hydroxylate confertifolin at C6, C14, or C15 to form trihydroxy confertifolin. The nonribosomal peptide synthetase astA catalyzes ester bond formation between trihydroxy contifolin and benzoic acid (BA) or 4-hydroxy benzoic acid (4HBA), leading to the formation of dideacetyl astellolides A and B, respectively. Finally, the O-acetyltransferase astG converts dideacetyl astellolides A and B into deacetyl astellolides A and B. This is Nonribosomal peptide synthetase astA from Aspergillus oryzae (strain ATCC 42149 / RIB 40) (Yellow koji mold).